Here is a 376-residue protein sequence, read N- to C-terminus: Erythronate-4-phosphate dehydrogenase (376 aa).

2 residues coordinate substrate: Ser-45 and Thr-67. NAD(+) contacts are provided by residues Asp-147, 209-211 (ASR), and Asp-235. Arg-211 is a catalytic residue. Glu-240 is a catalytic residue. Catalysis depends on His-257, which acts as the Proton donor. Gly-260 is a binding site for NAD(+). Tyr-261 serves as a coordination point for substrate.

It belongs to the D-isomer specific 2-hydroxyacid dehydrogenase family. PdxB subfamily. Homodimer.

Its subcellular location is the cytoplasm. The enzyme catalyses 4-phospho-D-erythronate + NAD(+) = (R)-3-hydroxy-2-oxo-4-phosphooxybutanoate + NADH + H(+). Its pathway is cofactor biosynthesis; pyridoxine 5'-phosphate biosynthesis; pyridoxine 5'-phosphate from D-erythrose 4-phosphate: step 2/5. Functionally, catalyzes the oxidation of erythronate-4-phosphate to 3-hydroxy-2-oxo-4-phosphonooxybutanoate. The polypeptide is Erythronate-4-phosphate dehydrogenase (Aeromonas hydrophila subsp. hydrophila (strain ATCC 7966 / DSM 30187 / BCRC 13018 / CCUG 14551 / JCM 1027 / KCTC 2358 / NCIMB 9240 / NCTC 8049)).